Reading from the N-terminus, the 107-residue chain is U1-lycotoxin-Ls1b (107 aa).

Positions 1 to 20 are cleaved as a signal peptide; the sequence is MMKVLVVVALLVTLISYSSS. Residues 21 to 41 constitute a propeptide that is removed on maturation; sequence EGIDDLEADELLSLMANEQTR. Cystine bridges form between cysteine 44/cysteine 59, cysteine 51/cysteine 68, cysteine 58/cysteine 86, and cysteine 70/cysteine 84.

This sequence belongs to the neurotoxin 19 (CSTX) family. 04 (U1-Lctx) subfamily. As to expression, expressed by the venom gland.

Its subcellular location is the secreted. The polypeptide is U1-lycotoxin-Ls1b (Lycosa singoriensis (Wolf spider)).